The chain runs to 122 residues: Putative protein adenylyltransferase MJ1547 (122 aa).

The GSX(10)DXD motif motif lies at 11 to 25; that stretch reads GSYAKNEYTKRSDID. Residues Asp-23, Asp-25, and Asp-48 each coordinate Mg(2+).

This sequence belongs to the MntA antitoxin family. Probably forms a complex with cognate toxin MJ1548. Mg(2+) serves as cofactor.

It carries out the reaction L-tyrosyl-[protein] + ATP = O-(5'-adenylyl)-L-tyrosyl-[protein] + diphosphate. It catalyses the reaction O-(5'-adenylyl)-L-tyrosyl-[protein] + ATP = O-[5'-(adenylyl-(5'-&gt;3')-adenylyl)]-L-tyrosyl-[protein] + diphosphate. In terms of biological role, probable antitoxin component of a putative type VII toxin-antitoxin (TA) system. Neutralizes cognate toxic MJ1548 by di-AMPylation. The protein is Putative protein adenylyltransferase MJ1547 of Methanocaldococcus jannaschii (strain ATCC 43067 / DSM 2661 / JAL-1 / JCM 10045 / NBRC 100440) (Methanococcus jannaschii).